The sequence spans 451 residues: Exodeoxyribonuclease 7 large subunit (451 aa).

The protein belongs to the XseA family. In terms of assembly, heterooligomer composed of large and small subunits.

Its subcellular location is the cytoplasm. It carries out the reaction Exonucleolytic cleavage in either 5'- to 3'- or 3'- to 5'-direction to yield nucleoside 5'-phosphates.. Bidirectionally degrades single-stranded DNA into large acid-insoluble oligonucleotides, which are then degraded further into small acid-soluble oligonucleotides. The sequence is that of Exodeoxyribonuclease 7 large subunit from Neisseria meningitidis serogroup A / serotype 4A (strain DSM 15465 / Z2491).